We begin with the raw amino-acid sequence, 715 residues long: Zinc finger protein 544 (715 aa).

The KRAB domain occupies 14-85 (VCFEDVAMAF…EQEAPRDWKA (72 aa)). Residues lysine 273 and lysine 289 each participate in a glycyl lysine isopeptide (Lys-Gly) (interchain with G-Cter in SUMO2) cross-link. The C2H2-type 1; atypical zinc-finger motif lies at 354-374 (SVCNQCGKSFSCCKLIHQRTH). 12 consecutive C2H2-type zinc fingers follow at residues 380–402 (FECTQCGKSFSQSYDLVIHQRTH), 408–430 (YECDLCGKSFTQRSKLITHQRIH), 436–458 (YQCIECRKSFRWNSNLIVHQRIH), 464–486 (YECTHCGKSFSQSYELVTHKRTH), 492–514 (FKCTQCGKSFSQKYDLVVHQRTH), 520–542 (YECNLCGKSFSQSSKLITHQRIH), 548–570 (YQCIECGKSFRWNSNLVIHQRIH), 576–598 (YDCTHCGKSFSQSYQLVAHKRTH), 604–626 (YECNECGKAFNRSTQLIRHLQIH), 632–654 (YKCNQCNKAFARSSYLVMHQRTH), 660–682 (FECSQCGKAFSGSSNLLSHHRIH), and 688–710 (YECSDCGKSFRQQSQLVVHRRTH). A Glycyl lysine isopeptide (Lys-Gly) (interchain with G-Cter in SUMO2) cross-link involves residue lysine 534.

It belongs to the krueppel C2H2-type zinc-finger protein family.

It is found in the nucleus. Its function is as follows. May be involved in transcriptional regulation. The chain is Zinc finger protein 544 (ZNF544) from Homo sapiens (Human).